Reading from the N-terminus, the 156-residue chain is Protein GLUTAMINE DUMPER 4 (156 aa).

The Extracellular segment spans residues 1-39; the sequence is MRPLSIKPTSLDVARHATSVESFGNHRPPISPWHSPVPY. The chain crosses the membrane as a helical span at residues 40-60; it reads LFGGLAAMLGLIAFALLILAC. Residues 61–156 are Cytoplasmic-facing; that stretch reads SYWRLSTSGD…AKENEETTSQ (96 aa). Residues 67–87 form a disordered region; it reads TSGDDSGERVDEEKESRSGVK. Residues 72-84 are compositionally biased toward basic and acidic residues; sequence SGERVDEEKESRS. Residues 99–103 carry the VIMAG motif; it reads VIMAG. Positions 136–156 are disordered; that stretch reads AGEEKMGDREKAKENEETTSQ.

It belongs to the GLUTAMINE DUMPER 1 (TC 9.B.60) family. Expressed in the vascular tissues, even in the minor veins of the leaves.

Its subcellular location is the membrane. Its function is as follows. Probable subunit of an amino acid transporter involved in the regulation of the amino acid metabolism. Stimulates amino acid export by activating nonselective amino acid facilitators. The sequence is that of Protein GLUTAMINE DUMPER 4 (GDU4) from Arabidopsis thaliana (Mouse-ear cress).